The sequence spans 497 residues: Cobyrinate a,c-diamide synthase (497 aa).

Positions 273-478 (RIGIALDEAF…AHLHGVAYRE (206 aa)) constitute a GATase cobBQ-type domain. The active-site Nucleophile is C355.

It belongs to the CobB/CbiA family. The cofactor is Mg(2+).

It carries out the reaction cob(II)yrinate + 2 L-glutamine + 2 ATP + 2 H2O = cob(II)yrinate a,c diamide + 2 L-glutamate + 2 ADP + 2 phosphate + 2 H(+). It catalyses the reaction Ni-sirohydrochlorin + 2 L-glutamine + 2 ATP + 2 H2O = Ni-sirohydrochlorin a,c-diamide + 2 L-glutamate + 2 ADP + 2 phosphate + 2 H(+). The protein operates within cofactor biosynthesis; adenosylcobalamin biosynthesis; cob(II)yrinate a,c-diamide from sirohydrochlorin (anaerobic route): step 10/10. In terms of biological role, catalyzes the ATP-dependent amidation of the two carboxylate groups at positions a and c of cobyrinate, using either L-glutamine or ammonia as the nitrogen source (Potential). Involved in the biosynthesis of the unique nickel-containing tetrapyrrole coenzyme F430, the prosthetic group of methyl-coenzyme M reductase (MCR), which plays a key role in methanogenesis and anaerobic methane oxidation. Catalyzes the ATP-dependent amidation of the two carboxylate groups at positions a and c of Ni-sirohydrochlorin, using L-glutamine or ammonia as the nitrogen source. This chain is Cobyrinate a,c-diamide synthase, found in Methanosarcina acetivorans (strain ATCC 35395 / DSM 2834 / JCM 12185 / C2A).